The following is a 115-amino-acid chain: Holo-[acyl-carrier-protein] synthase (115 aa).

Positions 6 and 51 each coordinate Mg(2+).

Belongs to the P-Pant transferase superfamily. AcpS family. The cofactor is Mg(2+).

The protein resides in the cytoplasm. It carries out the reaction apo-[ACP] + CoA = holo-[ACP] + adenosine 3',5'-bisphosphate + H(+). Its function is as follows. Transfers the 4'-phosphopantetheine moiety from coenzyme A to a Ser of acyl-carrier-protein. This Campylobacter jejuni subsp. jejuni serotype O:2 (strain ATCC 700819 / NCTC 11168) protein is Holo-[acyl-carrier-protein] synthase.